The following is a 371-amino-acid chain: Alginate lyase (371 aa).

A signal peptide spans 1-28 (MRRPMTLFKRISSPALLALALFGGAAHA). Substrate contacts are provided by residues 67–68 (SK), 140–141 (HT), and Tyr-258.

The protein belongs to the polysaccharide lyase 5 family.

The protein localises to the periplasm. It carries out the reaction Eliminative cleavage of alginate to give oligosaccharides with 4-deoxy-alpha-L-erythro-hex-4-enuronosyl groups at their non-reducing ends and beta-D-mannuronate at their reducing end.. In terms of biological role, catalyzes the depolymerization of alginate by cleaving the beta-1,4 glycosidic bond between two adjacent sugar residues via a beta-elimination mechanism. May serve to degrade mislocalized alginate that is trapped in the periplasmic space. The sequence is that of Alginate lyase from Pseudomonas putida (strain ATCC 47054 / DSM 6125 / CFBP 8728 / NCIMB 11950 / KT2440).